The following is an 81-amino-acid chain: Toxin TdNa10 (81 aa).

An N-terminal signal peptide occupies residues 1-20 (MWTFAIVLAFLLIGLDEGEA). The 61-residue stretch at 21 to 81 (LDGYPLSKNN…KMYPGELPCH (61 aa)) folds into the LCN-type CS-alpha/beta domain. 4 disulfides stabilise this stretch: cysteine 32-cysteine 80, cysteine 36-cysteine 57, cysteine 42-cysteine 62, and cysteine 46-cysteine 64.

It belongs to the long (4 C-C) scorpion toxin superfamily. Sodium channel inhibitor family. Beta subfamily. As to expression, expressed by the venom gland.

It is found in the secreted. Its function is as follows. Alpha toxins bind voltage-independently at site-3 of sodium channels (Nav) and inhibit the inactivation of the activated channels, thereby blocking neuronal transmission. This toxin binds, in vitro, to sodium channels and inhibits the inactivation of the activated channels. Seems not toxic to mice, crickets and sweet-water shrimps. In Tityus discrepans (Venezuelan scorpion), this protein is Toxin TdNa10.